Consider the following 70-residue polypeptide: Small ribosomal subunit protein bS21 (70 aa).

Residues 43–70 are disordered; sequence TERKRKAAAAVKRQHKRLRSLTLPPKLY. The span at 45 to 61 shows a compositional bias: basic residues; it reads RKRKAAAAVKRQHKRLR.

This sequence belongs to the bacterial ribosomal protein bS21 family.

This is Small ribosomal subunit protein bS21 from Dechloromonas aromatica (strain RCB).